A 380-amino-acid chain; its full sequence is Cytochrome b (380 aa).

The next 4 helical transmembrane spans lie at 33-53, 77-98, 113-133, and 178-198; these read FGSL…FLAM, WLIR…FIHV, WNIG…GYVL, and FFAF…VHLL. Residues His-83 and His-97 each contribute to the heme b site. Positions 182 and 196 each coordinate heme b. His-201 is an a ubiquinone binding site. The next 4 membrane-spanning stretches (helical) occupy residues 226 to 246, 288 to 308, 320 to 340, and 347 to 367; these read IKDI…VLFF, LGGV…PLLN, ITQT…WIGG, and FTTI…IFMP.

Belongs to the cytochrome b family. In terms of assembly, the cytochrome bc1 complex contains 11 subunits: 3 respiratory subunits (MT-CYB, CYC1 and UQCRFS1), 2 core proteins (UQCRC1 and UQCRC2) and 6 low-molecular weight proteins (UQCRH/QCR6, UQCRB/QCR7, UQCRQ/QCR8, UQCR10/QCR9, UQCR11/QCR10 and a cleavage product of UQCRFS1). This cytochrome bc1 complex then forms a dimer. Heme b is required as a cofactor.

It localises to the mitochondrion inner membrane. Component of the ubiquinol-cytochrome c reductase complex (complex III or cytochrome b-c1 complex) that is part of the mitochondrial respiratory chain. The b-c1 complex mediates electron transfer from ubiquinol to cytochrome c. Contributes to the generation of a proton gradient across the mitochondrial membrane that is then used for ATP synthesis. In Microryzomys minutus (Forest small rice rat), this protein is Cytochrome b (MT-CYB).